The following is a 134-amino-acid chain: Ribonuclease VapC40 (134 aa).

Positions 3 to 126 (APDTSVLVAG…LRAVETYERL (124 aa)) constitute a PINc domain. Residues D5 and D98 each coordinate Mg(2+).

The protein belongs to the PINc/VapC protein family. Mg(2+) serves as cofactor.

Toxic component of a type II toxin-antitoxin (TA) system. An RNase. Its cognate antitoxin is VapB40. This is Ribonuclease VapC40 from Mycobacterium tuberculosis (strain CDC 1551 / Oshkosh).